We begin with the raw amino-acid sequence, 376 residues long: Cytochrome c oxidase subunit 2, mitochondrial (376 aa).

Residues 164–184 (IFFFLVQILVFVLWVLSRALW) traverse the membrane as a helical segment. The Mitochondrial matrix segment spans residues 185 to 204 (CFRSKISPIPQRIVHGTTIE). Residues 205-225 (ILWTILPSIILMFIAIPSFTL) traverse the membrane as a helical segment. The Mitochondrial intermembrane portion of the chain corresponds to 226-376 (LYSMDDVVVD…YGSWVSNQIQ (151 aa)). The Cu cation site is built by H309, C344, E346, C348, H352, and M355. E346 contacts Mg(2+).

It belongs to the cytochrome c oxidase subunit 2 family. In terms of assembly, component of the cytochrome c oxidase (complex IV, CIV), a multisubunit enzyme composed of a catalytic core of 3 subunits and several supernumerary subunits. The complex exists as a monomer or a dimer and forms supercomplexes (SCs) in the inner mitochondrial membrane with ubiquinol-cytochrome c oxidoreductase (cytochrome b-c1 complex, complex III, CIII). The cofactor is Cu cation.

The protein localises to the mitochondrion inner membrane. The catalysed reaction is 4 Fe(II)-[cytochrome c] + O2 + 8 H(+)(in) = 4 Fe(III)-[cytochrome c] + 2 H2O + 4 H(+)(out). Its function is as follows. Component of the cytochrome c oxidase, the last enzyme in the mitochondrial electron transport chain which drives oxidative phosphorylation. The respiratory chain contains 3 multisubunit complexes succinate dehydrogenase (complex II, CII), ubiquinol-cytochrome c oxidoreductase (cytochrome b-c1 complex, complex III, CIII) and cytochrome c oxidase (complex IV, CIV), that cooperate to transfer electrons derived from NADH and succinate to molecular oxygen, creating an electrochemical gradient over the inner membrane that drives transmembrane transport and the ATP synthase. Cytochrome c oxidase is the component of the respiratory chain that catalyzes the reduction of oxygen to water. Electrons originating from reduced cytochrome c in the intermembrane space (IMS) are transferred via the dinuclear copper A center (CU(A)) of subunit 2 and heme A of subunit 1 to the active site in subunit 1, a binuclear center (BNC) formed by heme A3 and copper B (CU(B)). The BNC reduces molecular oxygen to 2 water molecules using 4 electrons from cytochrome c in the IMS and 4 protons from the mitochondrial matrix. In Vigna unguiculata (Cowpea), this protein is Cytochrome c oxidase subunit 2, mitochondrial (COX2).